We begin with the raw amino-acid sequence, 195 residues long: Imidazoleglycerol-phosphate dehydratase (195 aa).

Belongs to the imidazoleglycerol-phosphate dehydratase family.

The protein localises to the cytoplasm. The enzyme catalyses D-erythro-1-(imidazol-4-yl)glycerol 3-phosphate = 3-(imidazol-4-yl)-2-oxopropyl phosphate + H2O. It participates in amino-acid biosynthesis; L-histidine biosynthesis; L-histidine from 5-phospho-alpha-D-ribose 1-diphosphate: step 6/9. The protein is Imidazoleglycerol-phosphate dehydratase of Leuconostoc mesenteroides subsp. mesenteroides (strain ATCC 8293 / DSM 20343 / BCRC 11652 / CCM 1803 / JCM 6124 / NCDO 523 / NBRC 100496 / NCIMB 8023 / NCTC 12954 / NRRL B-1118 / 37Y).